A 285-amino-acid polypeptide reads, in one-letter code: Bifunctional protein FolD 2 (285 aa).

Residues glycine 164 to serine 166, serine 189, and valine 230 each bind NADP(+).

The protein belongs to the tetrahydrofolate dehydrogenase/cyclohydrolase family. In terms of assembly, homodimer.

The enzyme catalyses (6R)-5,10-methylene-5,6,7,8-tetrahydrofolate + NADP(+) = (6R)-5,10-methenyltetrahydrofolate + NADPH. It carries out the reaction (6R)-5,10-methenyltetrahydrofolate + H2O = (6R)-10-formyltetrahydrofolate + H(+). It functions in the pathway one-carbon metabolism; tetrahydrofolate interconversion. Catalyzes the oxidation of 5,10-methylenetetrahydrofolate to 5,10-methenyltetrahydrofolate and then the hydrolysis of 5,10-methenyltetrahydrofolate to 10-formyltetrahydrofolate. The polypeptide is Bifunctional protein FolD 2 (Geobacter sulfurreducens (strain ATCC 51573 / DSM 12127 / PCA)).